Consider the following 125-residue polypeptide: 14 kDa phosphohistidine phosphatase (125 aa).

At A2 the chain carries N-acetylalanine. Position 21 (K21) interacts with substrate. H53 serves as the catalytic Proton acceptor. S94–A96 serves as a coordination point for substrate.

This sequence belongs to the janus family. In terms of assembly, monomer. As to expression, expressed abundantly in heart and skeletal muscle.

The protein localises to the cytoplasm. The catalysed reaction is N(pros)-phospho-L-histidyl-[protein] + H2O = L-histidyl-[protein] + phosphate. It catalyses the reaction N(tele)-phospho-L-histidyl-[protein] + H2O = L-histidyl-[protein] + phosphate. Functionally, exhibits phosphohistidine phosphatase activity. This is 14 kDa phosphohistidine phosphatase (PHPT1) from Homo sapiens (Human).